Here is an 805-residue protein sequence, read N- to C-terminus: Angiotensin-converting enzyme 2 (805 aa).

Positions 1–17 (MSGSFWLLLSFAALTAA) are cleaved as a signal peptide. The Extracellular segment spans residues 18-740 (QSTTEELAKT…LSPPYRPPVT (723 aa)). Positions 19–607 (STTEELAKTF…QNRNSFVGWD (589 aa)) constitute a Peptidase M2 domain. Positions 30 to 41 (ETFNYEAQELSY) are interaction with SARS S protein. N-linked (GlcNAc...) asparagine glycosylation occurs at Asn53. Interaction with SARS S protein stretches follow at residues 82–84 (TYP) and 90–93 (DAKI). An intrachain disulfide couples Cys133 to Cys141. Arg169 is a chloride binding site. Asn216 carries an N-linked (GlcNAc...) asparagine glycan. Substrate is bound at residue Arg273. Asn322 is a glycosylation site (N-linked (GlcNAc...) asparagine). Cys344 and Cys361 are oxidised to a cystine. 345 to 346 (HP) lines the substrate pocket. The interaction with SARS S protein stretch occupies residues 353 to 357 (KGDFR). His374 contributes to the Zn(2+) binding site. Residue Glu375 is the Proton acceptor of the active site. His378 and Glu402 together coordinate Zn(2+). Chloride-binding residues include Trp477 and Lys481. His505 (proton donor) is an active-site residue. Tyr515 provides a ligand contact to substrate. Cys530 and Cys542 are disulfide-bonded. Asn546 carries N-linked (GlcNAc...) asparagine glycosylation. The region spanning 614–805 (SDQSIKVRIS…QHADDVQTSF (192 aa)) is the Collectrin-like domain. Residues 652-659 (REYFSKVK) form an essential for cleavage by ADAM17 region. Residues Asn660 and Asn690 are each glycosylated (N-linked (GlcNAc...) asparagine). An essential for cleavage by TMPRSS11D and TMPRSS2 region spans residues 697-716 (RSEVEDAIRMSRSRINDAFR). The helical transmembrane segment at 741–761 (IWLIVFGVVMGAIVVGIVLLI) threads the bilayer. The Cytoplasmic portion of the chain corresponds to 762–805 (VSGIRNRRKNDQAGSEENPYASVDLNKGENNPGFQHADDVQTSF). The tract at residues 771 to 805 (NDQAGSEENPYASVDLNKGENNPGFQHADDVQTSF) is disordered. The LIR motif lies at 778-786 (ENPYASVDL). At Tyr781 the chain carries Phosphotyrosine. The Endocytic sorting signal signature appears at 781 to 784 (YASV). Positions 781–785 (YASVD) match the SH2-binding motif. Phosphoserine is present on Ser783. Positions 792-795 (NPGF) match the PTB motif. Positions 803–805 (TSF) match the PDZ-binding motif.

Belongs to the peptidase M2 family. Homodimer. Interacts with the catalytically active form of TMPRSS2. Interacts with SLC6A19; this interaction is essential for expression and function of SLC6A19 in intestine. Interacts with ITGA5:ITGB1. Probably interacts (via endocytic sorting signal motif) with AP2M1; the interaction is inhibited by phosphorylation of Tyr-781. Interacts (via PDZ-binding motif) with NHERF1 (via PDZ domains); the interaction may enhance ACE2 membrane residence. As to quaternary structure, (Microbial infection) Interacts with SARS-CoV S protein. Zn(2+) is required as a cofactor. The cofactor is chloride. In terms of processing, proteolytic cleavage by ADAM17 generates a secreted form. Also cleaved by serine proteases: TMPRSS2, TMPRSS11D and HPN/TMPRSS1. Post-translationally, phosphorylated. Phosphorylation at Tyr-781 probably inhibits interaction with AP2M1 and enables interactions with proteins containing SH2 domains.

Its subcellular location is the secreted. It localises to the cell membrane. It is found in the cytoplasm. The protein resides in the cell projection. The protein localises to the cilium. Its subcellular location is the apical cell membrane. The enzyme catalyses angiotensin II + H2O = angiotensin-(1-7) + L-phenylalanine. The catalysed reaction is angiotensin I + H2O = angiotensin-(1-9) + L-leucine. Essential counter-regulatory carboxypeptidase of the renin-angiotensin hormone system that is a critical regulator of blood volume, systemic vascular resistance, and thus cardiovascular homeostasis. Converts angiotensin I to angiotensin 1-9, a nine-amino acid peptide with anti-hypertrophic effects in cardiomyocytes, and angiotensin II to angiotensin 1-7, which then acts as a beneficial vasodilator and anti-proliferation agent, counterbalancing the actions of the vasoconstrictor angiotensin II. Also removes the C-terminal residue from three other vasoactive peptides, neurotensin, kinetensin, and des-Arg bradykinin, but is not active on bradykinin. Also cleaves other biological peptides, such as apelins, casomorphins and dynorphin A. Plays an important role in amino acid transport by acting as binding partner of amino acid transporter SLC6A19 in intestine, regulating trafficking, expression on the cell surface, and its catalytic activity. Its function is as follows. (Microbial infection) Acts as a receptor for human coronavirus SARS. The chain is Angiotensin-converting enzyme 2 (ACE2) from Paguma larvata (Masked palm civet).